The following is a 182-amino-acid chain: Small ribosomal subunit protein uS9 (182 aa).

The protein belongs to the universal ribosomal protein uS9 family.

The chain is Small ribosomal subunit protein uS9 from Corynebacterium glutamicum (strain R).